We begin with the raw amino-acid sequence, 295 residues long: uncharacterized protein (295 aa).

Residues 1–13 (MRHSVARPTRLPR) show a composition bias toward basic residues. 2 disordered regions span residues 1–111 (MRHS…AGLS) and 183–295 (TSAF…PRDS). A compositionally biased stretch (low complexity) spans 57-67 (AGPSAGAAARP). Residues 68 to 77 (AAPPPQPREP) show a composition bias toward pro residues. Composition is skewed to basic and acidic residues over residues 245-257 (LRPKGARADDRRP) and 280-295 (GEPHKAGEVGNHPRDS).

This is an uncharacterized protein from Homo sapiens (Human).